The sequence spans 77 residues: Acyl carrier protein (77 aa).

A Carrier domain is found at 2 to 77 (ADVLERVTKI…DAVNYIKSRL (76 aa)). An O-(pantetheine 4'-phosphoryl)serine modification is found at Ser37.

This sequence belongs to the acyl carrier protein (ACP) family. Post-translationally, 4'-phosphopantetheine is transferred from CoA to a specific serine of apo-ACP by AcpS. This modification is essential for activity because fatty acids are bound in thioester linkage to the sulfhydryl of the prosthetic group.

It is found in the cytoplasm. Its pathway is lipid metabolism; fatty acid biosynthesis. In terms of biological role, carrier of the growing fatty acid chain in fatty acid biosynthesis. In Geobacillus kaustophilus (strain HTA426), this protein is Acyl carrier protein.